Consider the following 399-residue polypeptide: Elongation factor Tu (399 aa).

The tr-type G domain maps to 10 to 209 (KPHVNIGTIG…AVDDYIPTPV (200 aa)). The G1 stretch occupies residues 19 to 26 (GHVDHGKT). Residue 19 to 26 (GHVDHGKT) coordinates GTP. Thr26 contacts Mg(2+). A G2 region spans residues 62 to 66 (GITIN). The interval 83 to 86 (DCPG) is G3. GTP-binding positions include 83–87 (DCPGH) and 138–141 (NKCD). The tract at residues 138–141 (NKCD) is G4. Positions 175-177 (SAY) are G5.

This sequence belongs to the TRAFAC class translation factor GTPase superfamily. Classic translation factor GTPase family. EF-Tu/EF-1A subfamily. As to quaternary structure, monomer.

Its subcellular location is the cytoplasm. The catalysed reaction is GTP + H2O = GDP + phosphate + H(+). Its function is as follows. GTP hydrolase that promotes the GTP-dependent binding of aminoacyl-tRNA to the A-site of ribosomes during protein biosynthesis. The sequence is that of Elongation factor Tu from Bifidobacterium longum subsp. infantis (strain ATCC 15697 / DSM 20088 / JCM 1222 / NCTC 11817 / S12).